Consider the following 167-residue polypeptide: Endoribonuclease YbeY (167 aa).

3 residues coordinate Zn(2+): H132, H136, and H142.

Belongs to the endoribonuclease YbeY family. Zn(2+) serves as cofactor.

Its subcellular location is the cytoplasm. In terms of biological role, single strand-specific metallo-endoribonuclease involved in late-stage 70S ribosome quality control and in maturation of the 3' terminus of the 16S rRNA. The chain is Endoribonuclease YbeY from Clostridium beijerinckii (strain ATCC 51743 / NCIMB 8052) (Clostridium acetobutylicum).